The primary structure comprises 374 residues: DNA replication and repair protein RecF (374 aa).

ATP is bound at residue 30–37 (GENAQGKT).

Belongs to the RecF family.

The protein localises to the cytoplasm. In terms of biological role, the RecF protein is involved in DNA metabolism; it is required for DNA replication and normal SOS inducibility. RecF binds preferentially to single-stranded, linear DNA. It also seems to bind ATP. The protein is DNA replication and repair protein RecF of Geobacillus sp. (strain WCH70).